Here is a 274-residue protein sequence, read N- to C-terminus: Triosephosphate isomerase (274 aa).

N31–K33 lines the substrate pocket. H118 functions as the Electrophile in the catalytic mechanism. The active-site Proton acceptor is E188. Substrate-binding positions include G194, S234, and G255 to G256.

The protein belongs to the triosephosphate isomerase family. In terms of assembly, homodimer.

It is found in the cytoplasm. It catalyses the reaction D-glyceraldehyde 3-phosphate = dihydroxyacetone phosphate. It participates in carbohydrate biosynthesis; gluconeogenesis. Its pathway is carbohydrate degradation; glycolysis; D-glyceraldehyde 3-phosphate from glycerone phosphate: step 1/1. Involved in the gluconeogenesis. Catalyzes stereospecifically the conversion of dihydroxyacetone phosphate (DHAP) to D-glyceraldehyde-3-phosphate (G3P). This is Triosephosphate isomerase from Chlamydia trachomatis serovar D (strain ATCC VR-885 / DSM 19411 / UW-3/Cx).